Here is a 147-residue protein sequence, read N- to C-terminus: Hemoglobin subunit epsilon-2 (147 aa).

A Globin domain is found at 3–147 (HFTTEENVAV…VANALTHKYH (145 aa)). Y64 and H93 together coordinate heme b.

This sequence belongs to the globin family. As to expression, red blood cells.

Hemoglobin epsilon chain is a beta-type chain found in early embryos. This chain is Hemoglobin subunit epsilon-2 (HBE2), found in Bos taurus (Bovine).